Consider the following 374-residue polypeptide: Type II methyltransferase M.NgoFVII (374 aa).

The SAM-dependent MTase C5-type domain occupies 16-344 (PKILSLFSGC…KSILPIFSDN (329 aa)). Residue cysteine 88 is part of the active site.

It belongs to the class I-like SAM-binding methyltransferase superfamily. C5-methyltransferase family.

It catalyses the reaction a 2'-deoxycytidine in DNA + S-adenosyl-L-methionine = a 5-methyl-2'-deoxycytidine in DNA + S-adenosyl-L-homocysteine + H(+). Its function is as follows. A methylase, recognizes the double-stranded sequence 5'-GCSGC-3', methylates C-5 on both strands, and protects the DNA from cleavage by the NgoFVII endonuclease. The sequence is that of Type II methyltransferase M.NgoFVII (ngoFVIIM) from Neisseria gonorrhoeae.